The chain runs to 221 residues: Histone H1-like protein HC2 (221 aa).

Composition is skewed to basic residues over residues M1–A50 and P59–P70. The segment at M1–P70 is disordered.

It belongs to the histone H1/H5 family. HCT subfamily.

In terms of biological role, might have a role in establishing the nucleoid structure of elementary bodies. The protein is Histone H1-like protein HC2 (hctB) of Chlamydia trachomatis serovar L2 (strain ATCC VR-902B / DSM 19102 / 434/Bu).